Consider the following 665-residue polypeptide: Protein Fe65 homolog (665 aa).

Residues 1–12 show a composition bias toward basic and acidic residues; sequence MREGTPRVRIEV. Disordered regions lie at residues 1 to 43 and 90 to 111; these read MREG…DTAT and SRGY…RRRN. A compositionally biased stretch (polar residues) spans 14-24; that stretch reads KGSNRPSQFVS. 2 stretches are compositionally biased toward basic and acidic residues: residues 27–40 and 102–111; these read EEQR…RDSD and GRREEERRRN. Residues 233-266 enclose the WW domain; that stretch reads KDLPPGWEKHEDPQGYSYYWHVDSGTIQRQPPPP. 2 PID domains span residues 330 to 456 and 499 to 615; these read VRFA…RDIC and FLGV…VLDA.

As to quaternary structure, interacts (via PID 2 domain) with apl-1 (via cytoplasmic domain). In terms of processing, phosphorylated. In terms of tissue distribution, expressed in the pharynx (including pharyngeal muscle and nerve cells), ventral nerve cord and tail neurons.

The protein resides in the cytoplasm. It localises to the cytoskeleton. Functionally, modulates pharyngeal pumping activity, at least in part by regulating expression of the acetylcholinesterase genes ace-1 and ace-2. The chain is Protein Fe65 homolog from Caenorhabditis elegans.